Reading from the N-terminus, the 139-residue chain is uncharacterized protein (139 aa).

Residues 1 to 32 (MEFHDDKKNELQKKEEIITEAIDTLFQSSAFG) form the signal peptide. Residues 44–139 (SSLKDVQTTI…TLFFPKNKHE (96 aa)) enclose the sHSP domain.

Belongs to the small heat shock protein (HSP20) family.

This is an uncharacterized protein from Bacillus subtilis (strain 168).